We begin with the raw amino-acid sequence, 431 residues long: Serine hydroxymethyltransferase (431 aa).

(6S)-5,6,7,8-tetrahydrofolate-binding positions include leucine 127 and 131 to 133 (GHL). Lysine 236 bears the N6-(pyridoxal phosphate)lysine mark.

The protein belongs to the SHMT family. Homodimer. Requires pyridoxal 5'-phosphate as cofactor.

The protein resides in the cytoplasm. It carries out the reaction (6R)-5,10-methylene-5,6,7,8-tetrahydrofolate + glycine + H2O = (6S)-5,6,7,8-tetrahydrofolate + L-serine. It functions in the pathway one-carbon metabolism; tetrahydrofolate interconversion. It participates in amino-acid biosynthesis; glycine biosynthesis; glycine from L-serine: step 1/1. Functionally, catalyzes the reversible interconversion of serine and glycine with tetrahydrofolate (THF) serving as the one-carbon carrier. This reaction serves as the major source of one-carbon groups required for the biosynthesis of purines, thymidylate, methionine, and other important biomolecules. Also exhibits THF-independent aldolase activity toward beta-hydroxyamino acids, producing glycine and aldehydes, via a retro-aldol mechanism. The protein is Serine hydroxymethyltransferase of Granulibacter bethesdensis (strain ATCC BAA-1260 / CGDNIH1).